A 350-amino-acid polypeptide reads, in one-letter code: Aldo-keto reductase 1B (350 aa).

The active-site Proton donor is Tyr-84. A substrate-binding site is contributed by His-146. 244–306 contacts NADP(+); that stretch reads SPLGSPNRPW…SVTKDRIESN (63 aa).

Belongs to the aldo/keto reductase family.

It is found in the cytoplasm. It catalyses the reaction an alditol + NADP(+) = an aldose + NADPH + H(+). The catalysed reaction is all-trans-retinol + NADP(+) = all-trans-retinal + NADPH + H(+). It carries out the reaction 9-cis-retinol + NADP(+) = 9-cis-retinal + NADPH + H(+). The enzyme catalyses 13-cis-retinol + NADP(+) = 13-cis-retinal + NADPH + H(+). It catalyses the reaction glycerol + NADP(+) = D-glyceraldehyde + NADPH + H(+). The catalysed reaction is glycerol + NADP(+) = L-glyceraldehyde + NADPH + H(+). It carries out the reaction prenol + NADP(+) = 3-methyl-2-butenal + NADPH + H(+). The enzyme catalyses (E)-hex-2-en-1-ol + NADP(+) = (E)-hex-2-enal + NADPH + H(+). It catalyses the reaction (E,E)-2,4-hexadien-1-ol + NADP(+) = (E,E)-2,4-hexadienal + NADPH + H(+). The catalysed reaction is a 4-hydroxynonen-1-ol + NADP(+) = a 4-hydroxynonenal + NADPH + H(+). It carries out the reaction prostaglandin F2alpha + NADP(+) = prostaglandin H2 + NADPH + H(+). The enzyme catalyses allyl alcohol + NADP(+) = acrolein + NADPH + H(+). It catalyses the reaction pyridine 3-methanol + NADP(+) = pyridine-3-carbaldehyde + NADPH + H(+). The catalysed reaction is 1-hexadecanoyl-2-(5-oxopentanoyl)-sn-glycero-3-phosphocholine + NADPH + H(+) = 1-hexadecanoyl-2-(5-hydroxypentanoyl)-sn-glycero-3-phosphocholine + NADP(+). It carries out the reaction 1-hexadecanoyl-2-(7-oxoheptanoyl)-sn-glycero-3-phosphocholine + NADPH + H(+) = 1-hexadecanoyl-2-(7-hydroxyheptanoyl)-sn-glycero-3-phosphocholine + NADP(+). The enzyme catalyses 1-hexadecanoyl-2-(9-oxononanoyl)-sn-glycero-3-phosphocholine + NADPH + H(+) = 1-hexadecanoyl-2-(9-hydroxynonanoyl)-sn-glycero-3-phosphocholine + NADP(+). It catalyses the reaction 1-hexadecanoyl-2-(5-oxopentanoyl)-sn-glycero-3-phosphoethanolamine + NADPH + H(+) = 1-hexadecanoyl-2-(5-hydroxypentanoyl)-sn-glycero-3-phosphoethanolamine + NADP(+). Catalyzes the NADPH-dependent reduction of a wide variety of carbonyl-containing compounds to their corresponding alcohols. Displays enzymatic activity towards endogenous metabolites such as aromatic and aliphatic aldehydes, ketones, monosaccharides, bile acids and xenobiotics substrates. Key enzyme in the polyol pathway, catalyzes reduction of glucose to sorbitol during hyperglycemia. Reduces steroids and their derivatives and prostaglandins. Through production of prostaglandin F2alpha may regulate the activity of non-muscle myosin II in an autocrine or paracrine fashion; influences border cell and nurse cell stiffness to facilitate border cell cluster migration. Also regulates the cell surface localization of integrins in an autocrine or paracrine fashion; influences border cell adhesion to maintain border cell cluster morphology. In hemocytes, probably contributes to production of sugar alcohols in the hemolymph, which act as alarmins involved in gut-fat body innate immunological communication (GFIC); leads to activation of the imd/Relish signaling pathway in the fat body. The protein is Aldo-keto reductase 1B of Drosophila melanogaster (Fruit fly).